The primary structure comprises 81 residues: Protein PYP1 (81 aa).

The transit peptide at 1–25 (MAFVSGFTGMPVTARVSKAVCRTRM) directs the protein to the chloroplast. The tract at residues 27 to 57 (LEGGKSSGGGEATRDPEPTAVDPNDPKGKQQ) is disordered.

Its subcellular location is the plastid. It is found in the chloroplast. The sequence is that of Protein PYP1 from Pyropia yezoensis (Susabi-nori).